We begin with the raw amino-acid sequence, 201 residues long: Small ribosomal subunit protein uS4c (201 aa).

The segment at 15-43 (LGALPGLTSKRPRPGSDLRNQSRSGKRSQ) is disordered. Positions 89-150 (MRLDNILFRL…EQRSRALIQN (62 aa)) constitute an S4 RNA-binding domain.

Belongs to the universal ribosomal protein uS4 family. In terms of assembly, part of the 30S ribosomal subunit. Contacts protein S5. The interaction surface between S4 and S5 is involved in control of translational fidelity.

It is found in the plastid. The protein localises to the chloroplast. One of the primary rRNA binding proteins, it binds directly to 16S rRNA where it nucleates assembly of the body of the 30S subunit. In terms of biological role, with S5 and S12 plays an important role in translational accuracy. This Liriodendron tulipifera (Tuliptree) protein is Small ribosomal subunit protein uS4c (rps4).